A 602-amino-acid chain; its full sequence is MCGIFGIIFAERPRRPLGEILRRGLERLEYRGYDSAGVAVVDRGLVVKKDAGKVAEVAQRYGFDSLQGVVGLAHTRWATHGKPDQVNAHPHVDCRGVIAVVHNGIIEKYAELKEELMKRGHVFRSETDTEVIAHLVEEYKKQGLDTFSAFKKALSRVRGAYAIALIDAENPRAIYFARNLSPLIIGVGEGFNIVASDIPTVLDHTKRVIAVRDGEYGYITAGEVYIEADGVPQDVAARIEEIPWSAEMATKGGYPHFMLKEIYEQPESLASTAAGLEPAQIETVANALLAARNVYIVGAGTSYHAGLTLAFILPRLRITPIPVISSEYAIYEDLYDKDDLAIAISQSGETIDTIKAVKAMRERGVKVVAVTNVVGSTLSRESDVVLYTRAGPEIGVAATKTFTTQVLTLAAVYLTALRALGHDVAEHQRELKAVPDLARKTIEKTAGTAKELAKRLRQRHSAYYLGRGAALPVAMEGALKLKEVAYLHAEAYPAGESKHGPIALVEEGFPVIFVFSDPNTGEKTLSNVAEMKARGALTIGTVPARSDYAKKLDVAIEVPQTSELFAPILHVIPLQMLAYFTAVERGYDPDKPRNLAKTVTVE.

Cysteine 2 functions as the Nucleophile; for GATase activity in the catalytic mechanism. The 221-residue stretch at 2-222 (CGIFGIIFAE…DGEYGYITAG (221 aa)) folds into the Glutamine amidotransferase type-2 domain. SIS domains lie at 284–422 (VANA…ALGH) and 452–592 (LAKR…PDKP). Residue lysine 597 is the For Fru-6P isomerization activity of the active site.

As to quaternary structure, homodimer.

It localises to the cytoplasm. It carries out the reaction D-fructose 6-phosphate + L-glutamine = D-glucosamine 6-phosphate + L-glutamate. Catalyzes the first step in hexosamine metabolism, converting fructose-6P into glucosamine-6P using glutamine as a nitrogen source. This chain is Glutamine--fructose-6-phosphate aminotransferase [isomerizing], found in Pyrobaculum aerophilum (strain ATCC 51768 / DSM 7523 / JCM 9630 / CIP 104966 / NBRC 100827 / IM2).